Consider the following 717-residue polypeptide: CRISPR-associated protein Cas8b (717 aa).

Disordered stretches follow at residues 263 to 283 (IGVFSVKHPDAQPGLRQDQSW) and 698 to 717 (HEKEDEDDQDTEEPAESTTN). Acidic residues predominate over residues 701–717 (EDEDDQDTEEPAESTTN).

It is found in the cytoplasm. In terms of biological role, CRISPR (clustered regularly interspaced short palindromic repeat) is an adaptive immune system that provides protection against mobile genetic elements (viruses, transposable elements and conjugative plasmids). CRISPR clusters contain sequences complementary to antecedent mobile elements and target invading nucleic acids. CRISPR clusters are transcribed and processed into CRISPR RNA (crRNA). Plasmid targeted by CRISPR locus P1 transform wild-type cells very poorly. This subunit might be involved in stabilizing crRNA. The chain is CRISPR-associated protein Cas8b from Haloferax volcanii (strain ATCC 29605 / DSM 3757 / JCM 8879 / NBRC 14742 / NCIMB 2012 / VKM B-1768 / DS2) (Halobacterium volcanii).